Here is a 368-residue protein sequence, read N- to C-terminus: MQRVIIVGSTGSIGTQAIDFILKNRDSFLVVGLAASTQTSLLREQAQVFGTKNTAQGASEAAELIEATEADVVLNAITGAAGLLSTYATLKTGKRLALANKESLIMGGKYFLDMTSFKGQITPVDSEHSAIAQAMKSGKFSEVNKLILTASGGPFYDRESLEGITLKDALDHPTWNMGPMISINSATMFNKGLEIIEAHLLFGIPYSQIDVVIHPQSIVHSMVEYKDGSVIAQASVADMTLPIGYALSWPNRALNAVRPLEWGARQRWDFLPPTENSMRSINLARRAGEAGGVYPAVLNASNECAVEAFMAGKISFARIIHVTETVFNLYTKQHTNRESAKNPIEVILEEDARTRELAKTVIENMSAD.

Residues threonine 10, glycine 11, serine 12, isoleucine 13, glutamine 38, and asparagine 100 each coordinate NADPH. Lysine 101 serves as a coordination point for 1-deoxy-D-xylulose 5-phosphate. Position 102 (glutamate 102) interacts with NADPH. Aspartate 125 is a Mn(2+) binding site. Residues serine 126, glutamate 127, serine 151, and histidine 172 each contribute to the 1-deoxy-D-xylulose 5-phosphate site. Glutamate 127 serves as a coordination point for Mn(2+). Position 178 (glycine 178) interacts with NADPH. 1-deoxy-D-xylulose 5-phosphate contacts are provided by serine 185, asparagine 190, lysine 191, and glutamate 194. Glutamate 194 is a binding site for Mn(2+).

It belongs to the DXR family. Mg(2+) is required as a cofactor. It depends on Mn(2+) as a cofactor.

It catalyses the reaction 2-C-methyl-D-erythritol 4-phosphate + NADP(+) = 1-deoxy-D-xylulose 5-phosphate + NADPH + H(+). It participates in isoprenoid biosynthesis; isopentenyl diphosphate biosynthesis via DXP pathway; isopentenyl diphosphate from 1-deoxy-D-xylulose 5-phosphate: step 1/6. Catalyzes the NADPH-dependent rearrangement and reduction of 1-deoxy-D-xylulose-5-phosphate (DXP) to 2-C-methyl-D-erythritol 4-phosphate (MEP). In Tropheryma whipplei (strain TW08/27) (Whipple's bacillus), this protein is 1-deoxy-D-xylulose 5-phosphate reductoisomerase.